A 370-amino-acid polypeptide reads, in one-letter code: tRNA-specific 2-thiouridylase MnmA (370 aa).

ATP is bound by residues 11 to 18 (AMSGGVDS) and M37. An interaction with target base in tRNA region spans residues 99-101 (NPD). Residue C104 is the Nucleophile of the active site. C104 and C201 form a disulfide bridge. G129 serves as a coordination point for ATP. The interval 151–153 (KDQ) is interaction with tRNA. Residue C201 is the Cysteine persulfide intermediate of the active site. Residues 313 to 314 (RY) are interaction with tRNA.

This sequence belongs to the MnmA/TRMU family. Interacts with TusE.

It localises to the cytoplasm. It catalyses the reaction S-sulfanyl-L-cysteinyl-[protein] + uridine(34) in tRNA + AH2 + ATP = 2-thiouridine(34) in tRNA + L-cysteinyl-[protein] + A + AMP + diphosphate + H(+). Functionally, catalyzes the 2-thiolation of uridine at the wobble position (U34) of tRNA(Lys), tRNA(Glu) and tRNA(Gln), leading to the formation of s(2)U34, the first step of tRNA-mnm(5)s(2)U34 synthesis. Sulfur is provided by IscS, via a sulfur-relay system. Binds ATP and its substrate tRNAs. This is tRNA-specific 2-thiouridylase MnmA from Buchnera aphidicola subsp. Baizongia pistaciae (strain Bp).